The sequence spans 197 residues: Recombination protein RecR (197 aa).

Residues 56–71 (CPVCGTLDTRAPCSIC) form a C4-type zinc finger. Residues 79-174 (TLICVVRDVA…TVSGLAQGVP (96 aa)) enclose the Toprim domain.

This sequence belongs to the RecR family.

In terms of biological role, may play a role in DNA repair. It seems to be involved in an RecBC-independent recombinational process of DNA repair. It may act with RecF and RecO. The polypeptide is Recombination protein RecR (Rhodospirillum rubrum (strain ATCC 11170 / ATH 1.1.1 / DSM 467 / LMG 4362 / NCIMB 8255 / S1)).